Here is a 180-residue protein sequence, read N- to C-terminus: NADH-quinone oxidoreductase subunit I (180 aa).

4Fe-4S ferredoxin-type domains lie at 46–80 and 90–119; these read GRIVLTCDPDGYERCVACNLCAVACPVDCISLQKT and EFFRINFSRCIFCGLCEEACPTTAIQLTPD. [4Fe-4S] cluster is bound by residues cysteine 60, cysteine 63, cysteine 66, cysteine 70, cysteine 99, cysteine 102, cysteine 105, and cysteine 109.

The protein belongs to the complex I 23 kDa subunit family. As to quaternary structure, NDH-1 is composed of 14 different subunits. Subunits NuoA, H, J, K, L, M, N constitute the membrane sector of the complex. [4Fe-4S] cluster serves as cofactor.

It is found in the cell membrane. The catalysed reaction is a quinone + NADH + 5 H(+)(in) = a quinol + NAD(+) + 4 H(+)(out). In terms of biological role, NDH-1 shuttles electrons from NADH, via FMN and iron-sulfur (Fe-S) centers, to quinones in the respiratory chain. The immediate electron acceptor for the enzyme in this species is believed to be ubiquinone. Couples the redox reaction to proton translocation (for every two electrons transferred, four hydrogen ions are translocated across the cytoplasmic membrane), and thus conserves the redox energy in a proton gradient. The chain is NADH-quinone oxidoreductase subunit I from Baumannia cicadellinicola subsp. Homalodisca coagulata.